We begin with the raw amino-acid sequence, 374 residues long: MAMPPPLFAAASHASLLLPSPTIHSSTGSRRPFRLPLRSSRRPPVAAAAASGVPDEWGDRSPSAPEPPSQPDPPIDDDEWGRDDPSASGNSRPVLVTDEWGEPGVPEPQSTSAADPPTNDDEWGGDPAPPPPPPPVPEEDNEEERREELKRCLVDTVYGSDLGFRASSEVRGEVLELVTQLEATNPTPEPVQATHLLAGNWILIYTAYSELLPILAVGAAPLFKVDEISQEIDTNSMTIVNASTISSPFASFSFSATASFDVQSPSRIEVQFKEGSFQPPKISSSVDLPAEVDIFGQKISLGPVQQVLNPLQQAFASIAGSISGQPPLKLPIPGNNRARSWLLTTYLDKDLRISRGDGGLFILVKEGSPLLDQL.

The N-terminal 46 residues, methionine 1–alanine 46, are a transit peptide targeting the chloroplast. Residues proline 19–glutamate 148 form a disordered region. Low complexity predominate over residues glycine 28–proline 54. Pro residues-rich tracts occupy residues alanine 64–proline 73 and proline 127–valine 136.

The protein belongs to the PAP/fibrillin family.

The protein localises to the plastid. It localises to the chloroplast. In Oryza sativa subsp. japonica (Rice), this protein is Probable plastid-lipid-associated protein 3, chloroplastic (PAP3).